Reading from the N-terminus, the 358-residue chain is 3-dehydroquinate synthase (358 aa).

NAD(+)-binding positions include 102–106 (GVVGD), 126–127 (TT), Lys138, and Lys147. Positions 180, 243, and 260 each coordinate Zn(2+).

The protein belongs to the sugar phosphate cyclases superfamily. Dehydroquinate synthase family. Requires Co(2+) as cofactor. The cofactor is Zn(2+). NAD(+) serves as cofactor.

It localises to the cytoplasm. The catalysed reaction is 7-phospho-2-dehydro-3-deoxy-D-arabino-heptonate = 3-dehydroquinate + phosphate. It participates in metabolic intermediate biosynthesis; chorismate biosynthesis; chorismate from D-erythrose 4-phosphate and phosphoenolpyruvate: step 2/7. Its function is as follows. Catalyzes the conversion of 3-deoxy-D-arabino-heptulosonate 7-phosphate (DAHP) to dehydroquinate (DHQ). In Shouchella clausii (strain KSM-K16) (Alkalihalobacillus clausii), this protein is 3-dehydroquinate synthase.